Here is a 175-residue protein sequence, read N- to C-terminus: NADH-ubiquinone oxidoreductase chain 6 (175 aa).

The next 6 helical transmembrane spans lie at 1–21 (MMYI…GFSS), 24–44 (SPVY…GIIM), 51–71 (LGLV…GYTI), 87–107 (VVLS…VWLF), 112–132 (ELVG…EGGF), and 148–168 (CGFW…FIAT).

Belongs to the complex I subunit 6 family. As to quaternary structure, core subunit of respiratory chain NADH dehydrogenase (Complex I) which is composed of 45 different subunits.

Its subcellular location is the mitochondrion inner membrane. The catalysed reaction is a ubiquinone + NADH + 5 H(+)(in) = a ubiquinol + NAD(+) + 4 H(+)(out). Its function is as follows. Core subunit of the mitochondrial membrane respiratory chain NADH dehydrogenase (Complex I) which catalyzes electron transfer from NADH through the respiratory chain, using ubiquinone as an electron acceptor. Essential for the catalytic activity and assembly of complex I. The chain is NADH-ubiquinone oxidoreductase chain 6 (MT-ND6) from Elephas maximus (Indian elephant).